The following is a 192-amino-acid chain: Xanthine phosphoribosyltransferase (192 aa).

Xanthine contacts are provided by leucine 20 and asparagine 27. 128-132 (ANGQA) is a binding site for 5-phospho-alpha-D-ribose 1-diphosphate. Residue lysine 156 participates in xanthine binding.

Belongs to the purine/pyrimidine phosphoribosyltransferase family. Xpt subfamily. As to quaternary structure, homodimer.

It localises to the cytoplasm. It catalyses the reaction XMP + diphosphate = xanthine + 5-phospho-alpha-D-ribose 1-diphosphate. Its pathway is purine metabolism; XMP biosynthesis via salvage pathway; XMP from xanthine: step 1/1. Converts the preformed base xanthine, a product of nucleic acid breakdown, to xanthosine 5'-monophosphate (XMP), so it can be reused for RNA or DNA synthesis. The polypeptide is Xanthine phosphoribosyltransferase (Ligilactobacillus salivarius (strain UCC118) (Lactobacillus salivarius)).